Reading from the N-terminus, the 424-residue chain is Serine--tRNA ligase (424 aa).

Residue 229 to 231 (TAE) participates in L-serine binding. ATP is bound by residues 260–262 (RKE) and V276. E283 is a binding site for L-serine. 347–350 (ELVS) lines the ATP pocket. T383 contributes to the L-serine binding site.

The protein belongs to the class-II aminoacyl-tRNA synthetase family. Type-1 seryl-tRNA synthetase subfamily. In terms of assembly, homodimer. The tRNA molecule binds across the dimer.

Its subcellular location is the cytoplasm. It catalyses the reaction tRNA(Ser) + L-serine + ATP = L-seryl-tRNA(Ser) + AMP + diphosphate + H(+). It carries out the reaction tRNA(Sec) + L-serine + ATP = L-seryl-tRNA(Sec) + AMP + diphosphate + H(+). It functions in the pathway aminoacyl-tRNA biosynthesis; selenocysteinyl-tRNA(Sec) biosynthesis; L-seryl-tRNA(Sec) from L-serine and tRNA(Sec): step 1/1. In terms of biological role, catalyzes the attachment of serine to tRNA(Ser). Is also able to aminoacylate tRNA(Sec) with serine, to form the misacylated tRNA L-seryl-tRNA(Sec), which will be further converted into selenocysteinyl-tRNA(Sec). The protein is Serine--tRNA ligase of Methanosphaera stadtmanae (strain ATCC 43021 / DSM 3091 / JCM 11832 / MCB-3).